A 497-amino-acid chain; its full sequence is Glycerol kinase (497 aa).

Threonine 11 is a binding site for ADP. 3 residues coordinate ATP: threonine 11, serine 12, and serine 13. Sn-glycerol 3-phosphate is bound at residue threonine 11. Residue arginine 15 participates in ADP binding. Positions 81, 82, 133, and 242 each coordinate sn-glycerol 3-phosphate. 5 residues coordinate glycerol: arginine 81, glutamate 82, tyrosine 133, aspartate 242, and glutamine 243. Threonine 264 and glycine 307 together coordinate ADP. ATP is bound by residues threonine 264, glycine 307, glutamine 311, and glycine 412. ADP-binding residues include glycine 412 and asparagine 416.

It belongs to the FGGY kinase family.

The catalysed reaction is glycerol + ATP = sn-glycerol 3-phosphate + ADP + H(+). It participates in polyol metabolism; glycerol degradation via glycerol kinase pathway; sn-glycerol 3-phosphate from glycerol: step 1/1. With respect to regulation, inhibited by fructose 1,6-bisphosphate (FBP). Functionally, key enzyme in the regulation of glycerol uptake and metabolism. Catalyzes the phosphorylation of glycerol to yield sn-glycerol 3-phosphate. This Leptothrix cholodnii (strain ATCC 51168 / LMG 8142 / SP-6) (Leptothrix discophora (strain SP-6)) protein is Glycerol kinase.